Consider the following 270-residue polypeptide: Tryptophan synthase alpha chain (270 aa).

Active-site proton acceptor residues include E50 and D61.

Belongs to the TrpA family. Tetramer of two alpha and two beta chains.

It catalyses the reaction (1S,2R)-1-C-(indol-3-yl)glycerol 3-phosphate + L-serine = D-glyceraldehyde 3-phosphate + L-tryptophan + H2O. The protein operates within amino-acid biosynthesis; L-tryptophan biosynthesis; L-tryptophan from chorismate: step 5/5. Its function is as follows. The alpha subunit is responsible for the aldol cleavage of indoleglycerol phosphate to indole and glyceraldehyde 3-phosphate. The polypeptide is Tryptophan synthase alpha chain (Chlorobium luteolum (strain DSM 273 / BCRC 81028 / 2530) (Pelodictyon luteolum)).